The sequence spans 1035 residues: Ephrin type-A receptor 6 (1035 aa).

An N-terminal signal peptide occupies residues 1-22 (MGGCEVREFLLQFGFFLPLLTA). Topologically, residues 23–549 (WTGDCSHVSN…MAAEQGQILV (527 aa)) are extracellular. The Eph LBD domain occupies 33 to 211 (QVVLLDTSTV…FYKKCPFTVR (179 aa)). Fibronectin type-III domains follow at residues 330–440 (PPSA…TDQD) and 441–536 (APSL…TGDE). N-linked (GlcNAc...) asparagine glycans are attached at residues Asn342, Asn396, and Asn409. Residues 550-570 (IATAAVGGFTLLVILTLFFLI) form a helical membrane-spanning segment. Residues 571-1035 (TGRCQWYIKA…MHIQEKGFHV (465 aa)) are Cytoplasmic-facing. A phosphotyrosine; by autocatalysis mark is found at Tyr605 and Tyr611. The region spanning 630 to 943 (IRIERVIGAG…RNPSALHTLV (314 aa)) is the Protein kinase domain. Residues 636–644 (IGAGEFGEV) and Lys662 contribute to the ATP site. The active-site Proton acceptor is Asp797. 2 positions are modified to phosphotyrosine; by autocatalysis: Tyr830 and Tyr977. The region spanning 960-1024 (PLFVTVGDWL…VSSIQTLRLH (65 aa)) is the SAM domain. The PDZ-binding motif lies at 1033-1035 (FHV).

This sequence belongs to the protein kinase superfamily. Tyr protein kinase family. Ephrin receptor subfamily. In terms of assembly, heterotetramer upon binding of the ligand. The heterotetramer is composed of an ephrin dimer and a receptor dimer. Oligomerization is probably required to induce biological responses. Interacts (via SAM domain) with ANKS1A (via SAM domain). In terms of tissue distribution, brain.

It is found in the membrane. It carries out the reaction L-tyrosyl-[protein] + ATP = O-phospho-L-tyrosyl-[protein] + ADP + H(+). Its function is as follows. Receptor tyrosine kinase which binds promiscuously GPI-anchored ephrin-A family ligands residing on adjacent cells, leading to contact-dependent bidirectional signaling into neighboring cells. The signaling pathway downstream of the receptor is referred to as forward signaling while the signaling pathway downstream of the ephrin ligand is referred to as reverse signaling. This chain is Ephrin type-A receptor 6 (Epha6), found in Rattus norvegicus (Rat).